The primary structure comprises 255 residues: NAD kinase (255 aa).

Aspartate 44 serves as the catalytic Proton acceptor. Residues 44–45, histidine 49, 114–115, aspartate 144, alanine 152, 155–160, and glutamine 216 each bind NAD(+); these read DG, NE, and SAYNLS.

It belongs to the NAD kinase family. The cofactor is a divalent metal cation.

The protein localises to the cytoplasm. The enzyme catalyses NAD(+) + ATP = ADP + NADP(+) + H(+). Its function is as follows. Involved in the regulation of the intracellular balance of NAD and NADP, and is a key enzyme in the biosynthesis of NADP. Catalyzes specifically the phosphorylation on 2'-hydroxyl of the adenosine moiety of NAD to yield NADP. The sequence is that of NAD kinase from Rickettsia conorii (strain ATCC VR-613 / Malish 7).